We begin with the raw amino-acid sequence, 182 residues long: Photosystem I assembly protein Ycf4 (182 aa).

2 helical membrane passes run 22–42 (WSSV…SSYL) and 63–83 (VMCF…LTIF).

This sequence belongs to the Ycf4 family.

The protein localises to the plastid. Its subcellular location is the chloroplast thylakoid membrane. Its function is as follows. Seems to be required for the assembly of the photosystem I complex. The sequence is that of Photosystem I assembly protein Ycf4 from Oltmannsiellopsis viridis (Marine flagellate).